Here is a 332-residue protein sequence, read N- to C-terminus: Aspartate carbamoyltransferase catalytic subunit (332 aa).

The tract at residues 1 to 20 (MPNTHDTKNNVSPSEYAKFD) is disordered. Carbamoyl phosphate-binding residues include Arg72 and Thr73. Position 100 (Lys100) interacts with L-aspartate. Carbamoyl phosphate-binding residues include Arg122, His152, and Gln155. Arg186 and Arg241 together coordinate L-aspartate. The carbamoyl phosphate site is built by Gly282 and Pro283.

The protein belongs to the aspartate/ornithine carbamoyltransferase superfamily. ATCase family. Heterododecamer (2C3:3R2) of six catalytic PyrB chains organized as two trimers (C3), and six regulatory PyrI chains organized as three dimers (R2).

It carries out the reaction carbamoyl phosphate + L-aspartate = N-carbamoyl-L-aspartate + phosphate + H(+). It participates in pyrimidine metabolism; UMP biosynthesis via de novo pathway; (S)-dihydroorotate from bicarbonate: step 2/3. Functionally, catalyzes the condensation of carbamoyl phosphate and aspartate to form carbamoyl aspartate and inorganic phosphate, the committed step in the de novo pyrimidine nucleotide biosynthesis pathway. This is Aspartate carbamoyltransferase catalytic subunit from Psychrobacter sp. (strain TAD1).